The primary structure comprises 29 residues: EPIDLLGKVFVFSKESNVDDVKLLTPQTE.

The Pentraxin (PTX) domain maps to 6–29; that stretch reads LGKVFVFSKESNVDDVKLLTPQTE.

The protein belongs to the pentraxin family. As to quaternary structure, homopentamer. Pentraxin (or pentaxin) have a discoid arrangement of 5 non-covalently bound subunits. Ca(2+) serves as cofactor.

It localises to the secreted. This Hippoglossus hippoglossus (Atlantic halibut) protein is Serum amyloid P-component.